Here is a 734-residue protein sequence, read N- to C-terminus: Photosystem I P700 chlorophyll a apoprotein A2 (734 aa).

8 helical membrane-spanning segments follow: residues I46–A69, L135–Q158, L175–I199, M273–Y291, L330–Y353, A369–I395, A417–H439, and F517–V535. Residues C559 and C568 each contribute to the [4Fe-4S] cluster site. Transmembrane regions (helical) follow at residues A575–W596 and L643–I665. The chlorophyll a site is built by H654, M662, and Y670. Position 671 (W671) interacts with phylloquinone. A helical transmembrane segment spans residues L707–A727.

This sequence belongs to the PsaA/PsaB family. The PsaA/B heterodimer binds the P700 chlorophyll special pair and subsequent electron acceptors. PSI consists of a core antenna complex that captures photons, and an electron transfer chain that converts photonic excitation into a charge separation. The eukaryotic PSI reaction center is composed of at least 11 subunits. It depends on P700 is a chlorophyll a/chlorophyll a' dimer, A0 is one or more chlorophyll a, A1 is one or both phylloquinones and FX is a shared 4Fe-4S iron-sulfur center. as a cofactor.

It is found in the plastid. The protein resides in the chloroplast thylakoid membrane. The catalysed reaction is reduced [plastocyanin] + hnu + oxidized [2Fe-2S]-[ferredoxin] = oxidized [plastocyanin] + reduced [2Fe-2S]-[ferredoxin]. Its function is as follows. PsaA and PsaB bind P700, the primary electron donor of photosystem I (PSI), as well as the electron acceptors A0, A1 and FX. PSI is a plastocyanin-ferredoxin oxidoreductase, converting photonic excitation into a charge separation, which transfers an electron from the donor P700 chlorophyll pair to the spectroscopically characterized acceptors A0, A1, FX, FA and FB in turn. Oxidized P700 is reduced on the lumenal side of the thylakoid membrane by plastocyanin. This chain is Photosystem I P700 chlorophyll a apoprotein A2, found in Pinus thunbergii (Japanese black pine).